Reading from the N-terminus, the 411-residue chain is Serine/threonine-protein kinase 54 (411 aa).

Residues Ser-43 and Ser-45 each carry the phosphoserine; by PHOT1 modification. Residues 108 to 385 (LIIKSVIARG…EEVVAMLEAI (278 aa)) form the Protein kinase domain. Residues 114-122 (IARGTFGTV) and Lys-135 each bind ATP. The active-site Proton acceptor is Asp-253. Thr-286 is modified (phosphothreonine).

It belongs to the protein kinase superfamily. Ser/Thr protein kinase family. As to quaternary structure, binds to CBC2. Associates with PHOT2, BLUS1 and PM H(+)-ATPase (e.g. AHA1). In terms of processing, autophosphorylated. Phosphorylated in guard cells by HT1 in response to low CO(2) concentrations and by PHOT1 after blue light (BL) exposure. As to expression, expressed in guard cells.

Its subcellular location is the cytoplasm. It is found in the cytosol. It catalyses the reaction L-seryl-[protein] + ATP = O-phospho-L-seryl-[protein] + ADP + H(+). It carries out the reaction L-threonyl-[protein] + ATP = O-phospho-L-threonyl-[protein] + ADP + H(+). Its function is as follows. Serine/threonine protein kinase that phosphorylates proteins on serine and threonine residues. Collectively with CBC2, acts as a negative regulator of stomatal opening, probably via the inhibition of plasma membrane-type ATPases (AHA1 and AHA2) activity in guard cells, but in an abscisic acid (ABA)-independent manner. However, at low concentrations of CO(2), together with CBC2, stimulates stomatal opening via the inhibition of S-type anion channels in response to blue light (BL) and red light (RL), thus being a key component to maximize photosynthesis in the light under low CO(2) conditions. Required for temperature decrease in leaves. Downstream target of HIGH LEAF TEMPERATURE1 (HT1) during low CO(2)-induced stomatal opening. Also functions in the signaling pathways of phototropins. This is Serine/threonine-protein kinase 54 from Arabidopsis thaliana (Mouse-ear cress).